Reading from the N-terminus, the 160-residue chain is uncharacterized protein (160 aa).

Residues 69–145 (NQLLNMMAQA…EQREHVKEQR (77 aa)) are a coiled coil. Disordered stretches follow at residues 82 to 109 (GVRL…LKNA) and 129 to 160 (KKKQ…HRGK). Basic residues predominate over residues 86–99 (QGRRQKKINPKRLQ). Basic and acidic residues predominate over residues 133-146 (IMKEQREHVKEQRY). Residues 147-160 (MLKKQKAKKKHRGK) are compositionally biased toward basic residues.

This is an uncharacterized protein from Bacillus subtilis (strain 168).